A 443-amino-acid chain; its full sequence is Transcriptional adapter 2-alpha (443 aa).

Position 6 is a phosphoserine (Ser6). The ZZ-type zinc-finger motif lies at 12-69; that stretch reads SDKPPCRGCSSYLMEPYIKCAECGPPPFFLCLQCFTRGFEYKKHQSDHTYEIMTSDFP. Residues Cys17, Cys20, Cys31, Cys34, Cys42, Cys45, His55, and His59 each contribute to the Zn(2+) site. Positions 70-122 constitute an SANT domain; it reads VLDPSWTAQEEMALLEAVMDCGFGNWQDVANQMCTKTKEECEKHYMKHFINNP. Glycyl lysine isopeptide (Lys-Gly) (interchain with G-Cter in SUMO2) cross-links involve residues Lys132 and Lys138. In terms of domain architecture, SWIRM spans 356-443; sequence NSGRRSAPPL…LIREGYITKA (88 aa). A DNA-binding region spans residues 426–435; that stretch reads KTRKIYDFLI.

As to quaternary structure, interacts with GCN5 and NR3C1. Associated with the P/CAF protein in the PCAF complex. Component of the PCAF complex, at least composed of TADA2L/ADA2, TADA3L/ADA3, TAF5L/PAF65-beta, TAF6L/PAF65-alpha, TAF10/TAFII30, TAF12/TAFII20, TAF9/TAFII31 and TRRAP. Component of the ADA2A-containing complex (ATAC), composed of KAT14, KAT2A, TADA2L, TADA3L, ZZ3, MBIP, WDR5, YEATS2, CCDC101 and DR1. Interacts with CCDC134.

The protein localises to the nucleus. The protein resides in the chromosome. In terms of biological role, component of the ATAC complex, a complex with histone acetyltransferase activity on histones H3 and H4. Required for the function of some acidic activation domains, which activate transcription from a distant site. Binds double-stranded DNA. Binds dinucleosomes, probably at the linker region between neighboring nucleosomes. Plays a role in chromatin remodeling. May promote TP53/p53 'Lys-321' acetylation, leading to reduced TP53 stability and transcriptional activity. May also promote XRCC6 acetylation thus facilitating cell apoptosis in response to DNA damage. The sequence is that of Transcriptional adapter 2-alpha (Tada2a) from Rattus norvegicus (Rat).